A 332-amino-acid chain; its full sequence is DNA repair and recombination protein RadA (332 aa).

126-133 is an ATP binding site; sequence GEFGSGKT.

Belongs to the eukaryotic RecA-like protein family.

Its function is as follows. Involved in DNA repair and in homologous recombination. Binds and assemble on single-stranded DNA to form a nucleoprotein filament. Hydrolyzes ATP in a ssDNA-dependent manner and promotes DNA strand exchange between homologous DNA molecules. The polypeptide is DNA repair and recombination protein RadA (Pyrobaculum calidifontis (strain DSM 21063 / JCM 11548 / VA1)).